The chain runs to 249 residues: Cytochrome c oxidase subunit 2 (249 aa).

An N-terminal signal peptide occupies residues 1–13 (MLNLFQIMNMINN). Over 14-40 (DVPTPYGFYFQDSATPNQEGILELHDN) the chain is Mitochondrial intermembrane. Residues 41-62 (IMFYLVVILGLVSWMLFTIVRT) traverse the membrane as a helical segment. Over 63-80 (YSRNPMAYKYIKHGQTIE) the chain is Mitochondrial matrix. A helical membrane pass occupies residues 81–105 (IIWKIFPAVILLTIAFPSFILLYLC). Residues 106–249 (DEVISPAMTI…PKFLEWLNEQ (144 aa)) are Mitochondrial intermembrane-facing. His184, Cys219, Glu221, Cys223, His227, and Met230 together coordinate Cu cation. Glu221 is a binding site for Mg(2+).

Belongs to the cytochrome c oxidase subunit 2 family. As to quaternary structure, component of the cytochrome c oxidase (complex IV, CIV), a multisubunit enzyme composed of a catalytic core of 3 subunits and several supernumerary subunits. The complex exists as a monomer or a dimer and forms supercomplexes (SCs) in the inner mitochondrial membrane with ubiquinol-cytochrome c oxidoreductase (cytochrome b-c1 complex, complex III, CIII). Requires Cu cation as cofactor. In terms of processing, the signal sequence of COX2 is processed by IMP1.

It is found in the mitochondrion inner membrane. It carries out the reaction 4 Fe(II)-[cytochrome c] + O2 + 8 H(+)(in) = 4 Fe(III)-[cytochrome c] + 2 H2O + 4 H(+)(out). In terms of biological role, component of the cytochrome c oxidase, the last enzyme in the mitochondrial electron transport chain which drives oxidative phosphorylation. The respiratory chain contains 3 multisubunit complexes succinate dehydrogenase (complex II, CII), ubiquinol-cytochrome c oxidoreductase (cytochrome b-c1 complex, complex III, CIII) and cytochrome c oxidase (complex IV, CIV), that cooperate to transfer electrons derived from NADH and succinate to molecular oxygen, creating an electrochemical gradient over the inner membrane that drives transmembrane transport and the ATP synthase. Cytochrome c oxidase is the component of the respiratory chain that catalyzes the reduction of oxygen to water. Electrons originating from reduced cytochrome c in the intermembrane space (IMS) are transferred via the dinuclear copper A center (CU(A)) of subunit 2 and heme A of subunit 1 to the active site in subunit 1, a binuclear center (BNC) formed by heme A3 and copper B (CU(B)). The BNC reduces molecular oxygen to 2 water molecules using 4 electrons from cytochrome c in the IMS and 4 protons from the mitochondrial matrix. In Maudiozyma exigua (Yeast), this protein is Cytochrome c oxidase subunit 2 (COX2).